The primary structure comprises 340 residues: tRNA N6-adenosine threonylcarbamoyltransferase (340 aa).

Fe cation is bound by residues His-111 and His-115. Substrate-binding positions include 134–138, Asp-167, Gly-180, and Asn-276; that span reads LVSGG. Asp-304 is a binding site for Fe cation.

Belongs to the KAE1 / TsaD family. The cofactor is Fe(2+).

The protein localises to the cytoplasm. The enzyme catalyses L-threonylcarbamoyladenylate + adenosine(37) in tRNA = N(6)-L-threonylcarbamoyladenosine(37) in tRNA + AMP + H(+). In terms of biological role, required for the formation of a threonylcarbamoyl group on adenosine at position 37 (t(6)A37) in tRNAs that read codons beginning with adenine. Is involved in the transfer of the threonylcarbamoyl moiety of threonylcarbamoyl-AMP (TC-AMP) to the N6 group of A37, together with TsaE and TsaB. TsaD likely plays a direct catalytic role in this reaction. In Helicobacter pylori (strain J99 / ATCC 700824) (Campylobacter pylori J99), this protein is tRNA N6-adenosine threonylcarbamoyltransferase.